Reading from the N-terminus, the 89-residue chain is Small ribosomal subunit protein bS20 (89 aa).

It belongs to the bacterial ribosomal protein bS20 family.

Binds directly to 16S ribosomal RNA. The chain is Small ribosomal subunit protein bS20 from Stenotrophomonas maltophilia (strain K279a).